We begin with the raw amino-acid sequence, 167 residues long: Peptide deformylase (167 aa).

Cysteine 90 and histidine 132 together coordinate Fe cation. Glutamate 133 is an active-site residue. Histidine 136 provides a ligand contact to Fe cation.

Belongs to the polypeptide deformylase family. Requires Fe(2+) as cofactor.

It carries out the reaction N-terminal N-formyl-L-methionyl-[peptide] + H2O = N-terminal L-methionyl-[peptide] + formate. Functionally, removes the formyl group from the N-terminal Met of newly synthesized proteins. Requires at least a dipeptide for an efficient rate of reaction. N-terminal L-methionine is a prerequisite for activity but the enzyme has broad specificity at other positions. In Dehalococcoides mccartyi (strain CBDB1), this protein is Peptide deformylase.